Consider the following 204-residue polypeptide: Putative glutathione S-transferase alpha-3 (204 aa).

The residue at position 2 (Thr2) is an N-acetylthreonine. The GST N-terminal domain maps to 2–79 (TKPQLSYFKV…YIASQHDFVG (78 aa)). Residues Tyr8, 49–50 (QL), and 63–64 (QS) contribute to the glutathione site. The GST C-terminal domain occupies 81–202 (TPEEKALVDE…YLKNRPITER (122 aa)).

It belongs to the GST superfamily. Alpha family.

The catalysed reaction is RX + glutathione = an S-substituted glutathione + a halide anion + H(+). Conjugation of reduced glutathione to a wide number of exogenous and endogenous hydrophobic electrophiles. This is Putative glutathione S-transferase alpha-3 (gsta3) from Dictyostelium discoideum (Social amoeba).